An 832-amino-acid chain; its full sequence is Translation initiation factor IF-2 (832 aa).

The interval 1–244 is disordered; that stretch reads MSDTDGKKTL…KAMGGSQERE (244 aa). Over residues 18-27 the composition is skewed to polar residues; the sequence is TGQVKQSFSH. Residues 81-141 are compositionally biased toward basic and acidic residues; that stretch reads KANESEEAER…EARKKAEADA (61 aa). A compositionally biased stretch (low complexity) spans 142 to 171; the sequence is SSKPAAARSKADDPATMDPAAAQAAEARGA. Composition is skewed to basic and acidic residues over residues 178–201 and 227–244; these read PRKE…DDRR and RKQE…QERE. Residues 329–497 form the tr-type G domain; that stretch reads PRPPVITVMG…SIALQAEILE (169 aa). The G1 stretch occupies residues 338–345; the sequence is GHVDHGKT. GTP is bound at residue 338–345; the sequence is GHVDHGKT. A G2 region spans residues 363 to 367; that stretch reads GITQH. The interval 385–388 is G3; the sequence is DTPG. Residues 385 to 389 and 439 to 442 each bind GTP; these read DTPGH and NKID. A G4 region spans residues 439-442; sequence NKID. The tract at residues 475 to 477 is G5; sequence SAI.

Belongs to the TRAFAC class translation factor GTPase superfamily. Classic translation factor GTPase family. IF-2 subfamily.

The protein resides in the cytoplasm. One of the essential components for the initiation of protein synthesis. Protects formylmethionyl-tRNA from spontaneous hydrolysis and promotes its binding to the 30S ribosomal subunits. Also involved in the hydrolysis of GTP during the formation of the 70S ribosomal complex. This is Translation initiation factor IF-2 from Dinoroseobacter shibae (strain DSM 16493 / NCIMB 14021 / DFL 12).